The chain runs to 311 residues: MANPLYHKHIISINDLSREDLELVLRTAASLKANPQPELLKHKVIASCFFEASTRTRLSFETSMHRLGASVVGFADGSNTSLGKKGETLADTISVIGTYVDAIVMRHPQEGAARLATEFSGGIPVLNAGDGANQHPTQTLLDLFTIQETQGRLNNINIAMVGDLKYGRTVHSLAQALAKFEGNRFFFIAPDALAMPAYILQMLEEKGIQYSLHSSIEEVVPELDILYMTRVQKERLDPSEYANVKAQFVLRAADLAGARDNLKVLHPLPRIDEITTDVDKTPYAYYFQQAGNGIFARQALLALVLNADLAL.

Carbamoyl phosphate-binding residues include R55 and T56. An L-aspartate-binding site is contributed by K85. Residues R106, H135, and Q138 each coordinate carbamoyl phosphate. L-aspartate-binding residues include R168 and R230. Residues L268 and P269 each coordinate carbamoyl phosphate.

The protein belongs to the aspartate/ornithine carbamoyltransferase superfamily. ATCase family. As to quaternary structure, heterododecamer (2C3:3R2) of six catalytic PyrB chains organized as two trimers (C3), and six regulatory PyrI chains organized as three dimers (R2).

It carries out the reaction carbamoyl phosphate + L-aspartate = N-carbamoyl-L-aspartate + phosphate + H(+). The protein operates within pyrimidine metabolism; UMP biosynthesis via de novo pathway; (S)-dihydroorotate from bicarbonate: step 2/3. Catalyzes the condensation of carbamoyl phosphate and aspartate to form carbamoyl aspartate and inorganic phosphate, the committed step in the de novo pyrimidine nucleotide biosynthesis pathway. This Serratia proteamaculans (strain 568) protein is Aspartate carbamoyltransferase catalytic subunit.